Here is a 257-residue protein sequence, read N- to C-terminus: Ribonuclease HII (257 aa).

One can recognise an RNase H type-2 domain in the interval 72-257; sequence TYIAGIDEVG…FAPIKDMIQK (186 aa). A divalent metal cation is bound by residues Asp-78, Glu-79, and Asp-170.

Belongs to the RNase HII family. Mn(2+) serves as cofactor. The cofactor is Mg(2+).

The protein resides in the cytoplasm. The catalysed reaction is Endonucleolytic cleavage to 5'-phosphomonoester.. In terms of biological role, endonuclease that specifically degrades the RNA of RNA-DNA hybrids. This Bacillus cereus (strain B4264) protein is Ribonuclease HII.